A 248-amino-acid polypeptide reads, in one-letter code: Probable phosphatase Sfri_3709 (248 aa).

The Zn(2+) site is built by histidine 8, histidine 10, histidine 16, histidine 41, glutamate 74, histidine 102, histidine 132, aspartate 193, and histidine 195.

It belongs to the PHP family. The cofactor is Zn(2+).

The protein is Probable phosphatase Sfri_3709 of Shewanella frigidimarina (strain NCIMB 400).